The sequence spans 239 residues: ATP-dependent dethiobiotin synthetase BioD (239 aa).

ATP is bound at residue 15-20 (EIGKTF). A Mg(2+)-binding site is contributed by Thr-19. Residue Lys-40 is part of the active site. ATP-binding positions include Asp-57, 118-121 (EGVG), and 178-179 (NH). The Mg(2+) site is built by Asp-57 and Glu-118.

It belongs to the dethiobiotin synthetase family. In terms of assembly, homodimer. Mg(2+) is required as a cofactor.

It localises to the cytoplasm. It catalyses the reaction (7R,8S)-7,8-diammoniononanoate + CO2 + ATP = (4R,5S)-dethiobiotin + ADP + phosphate + 3 H(+). Its pathway is cofactor biosynthesis; biotin biosynthesis; biotin from 7,8-diaminononanoate: step 1/2. Functionally, catalyzes a mechanistically unusual reaction, the ATP-dependent insertion of CO2 between the N7 and N8 nitrogen atoms of 7,8-diaminopelargonic acid (DAPA, also called 7,8-diammoniononanoate) to form a ureido ring. The sequence is that of ATP-dependent dethiobiotin synthetase BioD from Burkholderia orbicola (strain MC0-3).